An 814-amino-acid chain; its full sequence is Cellulase/esterase CelE (814 aa).

A signal peptide spans 1–34 (MKKIVSLVCVLVMLVSILGSFSVVAASPVKGFQV). Residues 35-354 (SGTKLLDASG…AVFWWDNGYY (320 aa)) form a cellulase region. The Proton donor; for cellulase activity role is filled by Glu-193. The Nucleophile; for cellulase activity role is filled by Glu-316. A Dockerin domain is found at 409-479 (ANILYGDVNG…LLRSIDKFPA (71 aa)). Ca(2+) is bound by residues Asp-415, Asn-417, Asp-419, Gly-420, Lys-421, Asp-426, Asp-451, Val-452, Asn-453, Asp-455, Lys-457, and Asp-462. The tract at residues 490–814 (PGILYNGRFD…TAEIKNKLGW (325 aa)) is esterase. Ser-612 (nucleophile; for esterase activity) is an active-site residue.

It in the N-terminal section; belongs to the glycosyl hydrolase 5 (cellulase A) family. This sequence in the C-terminal section; belongs to the carbohydrate esterase 2 (CE2) family.

Its subcellular location is the secreted. The catalysed reaction is Endohydrolysis of (1-&gt;4)-beta-D-glucosidic linkages in cellulose, lichenin and cereal beta-D-glucans.. It catalyses the reaction Deacetylation of xylans and xylo-oligosaccharides.. The protein operates within glycan metabolism; cellulose degradation. It participates in glycan degradation; xylan degradation. Its activity is regulated as follows. Esterase activity of the CE2 module is inhibited when this domain binds to cellohexaose or beta-glucan. Functionally, multifunctional enzyme involved in the degradation of plant cell wall polysaccharides. Displays endoglucanase activity against carboxymethyl cellulose (CMC) and barley beta-glucan. Also catalyzes the deacetylation of acetylated birchwood xylan and glucomannan, with a preference for the latter, and of the synthetic substrate 4-nitrophenyl acetate (4-NPAc). The sequence is that of Cellulase/esterase CelE from Acetivibrio thermocellus (strain ATCC 27405 / DSM 1237 / JCM 9322 / NBRC 103400 / NCIMB 10682 / NRRL B-4536 / VPI 7372) (Clostridium thermocellum).